Consider the following 243-residue polypeptide: uncharacterized protein (243 aa).

The N-terminal stretch at 1–19 (MKSLPLLGILAFAANRLSA) is a signal peptide. 2 N-linked (GlcNAc...) asparagine glycosylation sites follow: asparagine 112 and asparagine 206.

This is an uncharacterized protein from Encephalitozoon cuniculi (strain GB-M1) (Microsporidian parasite).